The chain runs to 199 residues: Holliday junction branch migration complex subunit RuvA (199 aa).

Residues 1–64 (MIALLTGKLA…EDAINLYGFR (64 aa)) are domain I. The segment at 65–143 (TQQEKELFQL…KLGLAQPQAG (79 aa)) is domain II. Positions 144–148 (GTTAP) are flexible linker. The segment at 149–199 (AKQEIRDDVLSALINLGYKEAVVQKALAELKVTEDATVELVLKQALKILMK) is domain III.

It belongs to the RuvA family. Homotetramer. Forms an RuvA(8)-RuvB(12)-Holliday junction (HJ) complex. HJ DNA is sandwiched between 2 RuvA tetramers; dsDNA enters through RuvA and exits via RuvB. An RuvB hexamer assembles on each DNA strand where it exits the tetramer. Each RuvB hexamer is contacted by two RuvA subunits (via domain III) on 2 adjacent RuvB subunits; this complex drives branch migration. In the full resolvosome a probable DNA-RuvA(4)-RuvB(12)-RuvC(2) complex forms which resolves the HJ.

It is found in the cytoplasm. In terms of biological role, the RuvA-RuvB-RuvC complex processes Holliday junction (HJ) DNA during genetic recombination and DNA repair, while the RuvA-RuvB complex plays an important role in the rescue of blocked DNA replication forks via replication fork reversal (RFR). RuvA specifically binds to HJ cruciform DNA, conferring on it an open structure. The RuvB hexamer acts as an ATP-dependent pump, pulling dsDNA into and through the RuvAB complex. HJ branch migration allows RuvC to scan DNA until it finds its consensus sequence, where it cleaves and resolves the cruciform DNA. The polypeptide is Holliday junction branch migration complex subunit RuvA (Citrifermentans bemidjiense (strain ATCC BAA-1014 / DSM 16622 / JCM 12645 / Bem) (Geobacter bemidjiensis)).